The primary structure comprises 248 residues: Phosphoglycerate mutase (248 aa).

Substrate contacts are provided by residues 8-15 (RHGQSEWN), 21-22 (TG), Arg-60, 87-90 (ERHY), Lys-98, 114-115 (RR), and 183-184 (GN). His-9 functions as the Tele-phosphohistidine intermediate in the catalytic mechanism. Catalysis depends on Glu-87, which acts as the Proton donor/acceptor.

The protein belongs to the phosphoglycerate mutase family. BPG-dependent PGAM subfamily.

It localises to the cytoplasm. It carries out the reaction (2R)-2-phosphoglycerate = (2R)-3-phosphoglycerate. It functions in the pathway carbohydrate degradation; glycolysis; pyruvate from D-glyceraldehyde 3-phosphate: step 3/5. The protein is Phosphoglycerate mutase (GPM1) of Candida albicans (strain SC5314 / ATCC MYA-2876) (Yeast).